We begin with the raw amino-acid sequence, 814 residues long: Rho GTPase-activating protein 44 (814 aa).

In terms of domain architecture, BAR spans 14–249 (QTVGRAEKTE…IKAQQEAWVE (236 aa)). Residues 255–445 (KPLEEHLMIS…PIIQHADWFF (191 aa)) enclose the Rho-GAP domain. Disordered stretches follow at residues 467-493 (ANYS…RPLS), 531-768 (SAGR…SMST), and 784-814 (STLR…STAL). The segment covering 479–489 (PADRRQPEQAR) has biased composition (basic and acidic residues). Residue serine 493 is modified to Phosphoserine. Low complexity-rich tracts occupy residues 531-541 (SAGRKAACAPP), 567-581 (SPAT…SGAS), 598-612 (SPGS…SIQG), 622-637 (PQPA…DQSP), 684-704 (SPYG…LSPA), and 741-752 (SVSLSASSPQST). The tract at residues 727 to 814 (KPRQRPTLPP…SEEESESTAL (88 aa)) is interaction with BST2. Residues 790–805 (PLEHARRHSVTDKRDS) show a composition bias toward basic and acidic residues. Serine 805 carries the phosphoserine modification. The PDZ-binding motif lies at 811-814 (STAL).

Interacts with BST2 (via cytoplasmic domain). Interacts (probably via PDZ-binding motif) with SHANK3 (via PDZ domain); the interaction takes place in dendritic spines and promotes GRIA1 exocytosis. As to expression, expressed in brain, detected at high levels in hippocampal CA1 (at protein level).

The protein localises to the cell projection. The protein resides in the dendritic spine. It localises to the recycling endosome. It is found in the presynapse. Its subcellular location is the dendrite. GTPase-activating protein (GAP) that stimulates the GTPase activity of Rho-type GTPases. Thereby, controls Rho-type GTPases cycling between their active GTP-bound and inactive GDP-bound states. Acts as a GAP at least for CDC42 and RAC1. In neurons, is involved in dendritic spine formation and synaptic plasticity in a specific RAC1-GAP activity. Limits the initiation of exploratory dendritic filopodia. Recruited to actin-patches that seed filopodia, binds specifically to plasma membrane sections that are deformed inward by acto-myosin mediated contractile forces. Acts through GAP activity on RAC1 to reduce actin polymerization necessary for filopodia formation. In association with SHANK3, promotes GRIA1 exocytosis from recycling endosomes and spine morphological changes associated to long-term potentiation. This is Rho GTPase-activating protein 44 from Rattus norvegicus (Rat).